Here is a 255-residue protein sequence, read N- to C-terminus: tRNA (guanine-N(1)-)-methyltransferase (255 aa).

S-adenosyl-L-methionine contacts are provided by residues glycine 113 and 133–138 (IGDYVL).

It belongs to the RNA methyltransferase TrmD family. In terms of assembly, homodimer.

The protein localises to the cytoplasm. It carries out the reaction guanosine(37) in tRNA + S-adenosyl-L-methionine = N(1)-methylguanosine(37) in tRNA + S-adenosyl-L-homocysteine + H(+). Specifically methylates guanosine-37 in various tRNAs. The sequence is that of tRNA (guanine-N(1)-)-methyltransferase from Escherichia coli O127:H6 (strain E2348/69 / EPEC).